The following is a 485-amino-acid chain: Apolipoprotein N-acyltransferase (485 aa).

6 helical membrane-spanning segments follow: residues 8 to 28 (IAGA…IAFV), 49 to 69 (GWLF…VSIH), 76 to 96 (VPLA…FIAF), 121 to 141 (WWVV…WLFL), 157 to 177 (FGIY…YLLV), and 186 to 206 (IMCL…TFIP). Positions 220 to 457 (VQGNIGQRLK…RLLLTGQIKP (238 aa)) constitute a CN hydrolase domain. Glutamate 259 serves as the catalytic Proton acceptor. Lysine 317 is an active-site residue. The active-site Nucleophile is cysteine 369. A helical membrane pass occupies residues 464–484 (LMRWNYYPVVGIIIIFLLLTF).

It belongs to the CN hydrolase family. Apolipoprotein N-acyltransferase subfamily.

Its subcellular location is the cell inner membrane. It catalyses the reaction N-terminal S-1,2-diacyl-sn-glyceryl-L-cysteinyl-[lipoprotein] + a glycerophospholipid = N-acyl-S-1,2-diacyl-sn-glyceryl-L-cysteinyl-[lipoprotein] + a 2-acyl-sn-glycero-3-phospholipid + H(+). It functions in the pathway protein modification; lipoprotein biosynthesis (N-acyl transfer). Functionally, catalyzes the phospholipid dependent N-acylation of the N-terminal cysteine of apolipoprotein, the last step in lipoprotein maturation. The protein is Apolipoprotein N-acyltransferase of Coxiella burnetii (strain RSA 493 / Nine Mile phase I).